The following is a 243-amino-acid chain: Orotidine 5'-phosphate decarboxylase (243 aa).

Residues Asp19, Lys41, 69-78 (DLKFFDIPAT), Thr124, Arg185, Gln194, Gly214, and Arg215 each bind substrate. Residue Lys71 is the Proton donor of the active site.

It belongs to the OMP decarboxylase family. Type 1 subfamily. As to quaternary structure, homodimer.

It catalyses the reaction orotidine 5'-phosphate + H(+) = UMP + CO2. The protein operates within pyrimidine metabolism; UMP biosynthesis via de novo pathway; UMP from orotate: step 2/2. Catalyzes the decarboxylation of orotidine 5'-monophosphate (OMP) to uridine 5'-monophosphate (UMP). This Xanthomonas axonopodis pv. citri (strain 306) protein is Orotidine 5'-phosphate decarboxylase.